The following is a 309-amino-acid chain: Porphobilinogen deaminase (309 aa).

C242 carries the S-(dipyrrolylmethanemethyl)cysteine modification.

This sequence belongs to the HMBS family. As to quaternary structure, monomer. The cofactor is dipyrromethane.

It catalyses the reaction 4 porphobilinogen + H2O = hydroxymethylbilane + 4 NH4(+). Its pathway is porphyrin-containing compound metabolism; protoporphyrin-IX biosynthesis; coproporphyrinogen-III from 5-aminolevulinate: step 2/4. Functionally, tetrapolymerization of the monopyrrole PBG into the hydroxymethylbilane pre-uroporphyrinogen in several discrete steps. The chain is Porphobilinogen deaminase from Actinobacillus succinogenes (strain ATCC 55618 / DSM 22257 / CCUG 43843 / 130Z).